Here is a 348-residue protein sequence, read N- to C-terminus: Probable dual-specificity RNA methyltransferase RlmN (348 aa).

Glutamate 95 serves as the catalytic Proton acceptor. Residues 101–335 form the Radical SAM core domain; it reads SGNRLTICVS…VSLRASRGLD (235 aa). Cysteine 108 and cysteine 340 are disulfide-bonded. Positions 115, 119, and 122 each coordinate [4Fe-4S] cluster. S-adenosyl-L-methionine contacts are provided by residues 162–163, serine 192, 221–223, and asparagine 297; these read GE and SLH. Cysteine 340 (S-methylcysteine intermediate) is an active-site residue.

This sequence belongs to the radical SAM superfamily. RlmN family. [4Fe-4S] cluster serves as cofactor.

The protein resides in the cytoplasm. It catalyses the reaction adenosine(2503) in 23S rRNA + 2 reduced [2Fe-2S]-[ferredoxin] + 2 S-adenosyl-L-methionine = 2-methyladenosine(2503) in 23S rRNA + 5'-deoxyadenosine + L-methionine + 2 oxidized [2Fe-2S]-[ferredoxin] + S-adenosyl-L-homocysteine. The enzyme catalyses adenosine(37) in tRNA + 2 reduced [2Fe-2S]-[ferredoxin] + 2 S-adenosyl-L-methionine = 2-methyladenosine(37) in tRNA + 5'-deoxyadenosine + L-methionine + 2 oxidized [2Fe-2S]-[ferredoxin] + S-adenosyl-L-homocysteine. Functionally, specifically methylates position 2 of adenine 2503 in 23S rRNA and position 2 of adenine 37 in tRNAs. The protein is Probable dual-specificity RNA methyltransferase RlmN of Prochlorococcus marinus (strain SARG / CCMP1375 / SS120).